A 104-amino-acid chain; its full sequence is UPF0473 protein LJ_0477 (104 aa).

The protein belongs to the UPF0473 family.

The chain is UPF0473 protein LJ_0477 from Lactobacillus johnsonii (strain CNCM I-12250 / La1 / NCC 533).